The primary structure comprises 398 residues: Tryptophan synthase beta chain (398 aa).

The residue at position 88 (Lys88) is an N6-(pyridoxal phosphate)lysine.

The protein belongs to the TrpB family. Tetramer of two alpha and two beta chains. Requires pyridoxal 5'-phosphate as cofactor.

It carries out the reaction (1S,2R)-1-C-(indol-3-yl)glycerol 3-phosphate + L-serine = D-glyceraldehyde 3-phosphate + L-tryptophan + H2O. The protein operates within amino-acid biosynthesis; L-tryptophan biosynthesis; L-tryptophan from chorismate: step 5/5. In terms of biological role, the beta subunit is responsible for the synthesis of L-tryptophan from indole and L-serine. In Actinobacillus succinogenes (strain ATCC 55618 / DSM 22257 / CCUG 43843 / 130Z), this protein is Tryptophan synthase beta chain.